The primary structure comprises 124 residues: Predicted GPI-anchored protein 11 (124 aa).

Residues 1–18 (MKFQFVTALALASTMAVA) form the signal peptide. Positions 38–59 (REGGSTGAELQDNNQPTAGLFG) are disordered. Serine 107 is lipidated: GPI-anchor amidated serine. Positions 108–124 (GAAGGVGNLFSGILGGL) are cleaved as a propeptide — removed in mature form.

Its subcellular location is the cell membrane. This is Predicted GPI-anchored protein 11 (PGA11) from Candida albicans (strain SC5314 / ATCC MYA-2876) (Yeast).